The following is a 420-amino-acid chain: Serine/threonine-protein phosphatase 4 regulatory subunit 2-A (420 aa).

Residues Gly-157 to Asp-420 are disordered. Over residues Ser-182–Ser-195 the composition is skewed to polar residues. Basic and acidic residues predominate over residues Thr-196–Val-210. Over residues Glu-212–Ala-224 the composition is skewed to low complexity. A compositionally biased stretch (basic and acidic residues) spans His-229–Lys-250. Positions Glu-251–Asp-266 are enriched in acidic residues. Residues Glu-267 to His-276 show a composition bias toward basic and acidic residues. Positions Pro-278–Val-296 are enriched in polar residues. The span at Gly-318–His-332 shows a compositional bias: basic and acidic residues. Over residues Ala-346–Asn-364 the composition is skewed to acidic residues. Low complexity predominate over residues Ser-368–Glu-394. A compositionally biased stretch (acidic residues) spans Glu-411–Asp-420.

Belongs to the PPP4R2 family. As to quaternary structure, serine/threonine-protein phosphatase 4 (PP4) occurs in different assemblies of the catalytic and one or more regulatory subunits.

Regulatory subunit of serine/threonine-protein phosphatase 4 (PP4C). The chain is Serine/threonine-protein phosphatase 4 regulatory subunit 2-A (ppp4r2a) from Danio rerio (Zebrafish).